The following is a 349-amino-acid chain: Sphingolipid C4-hydroxylase SUR2 (349 aa).

The next 5 membrane-spanning stretches (helical) occupy residues 9–29, 50–70, 99–119, 148–168, and 209–229; these read AAGS…MHYA, VLAL…FHVI, FLEV…FMHF, IYYG…FLFV, and PVEG…LTHL. A Fatty acid hydroxylase domain is found at 162 to 297; it reads FAGFLFVDTW…FTFWDNLFQT (136 aa).

Belongs to the sterol desaturase family.

The protein localises to the endoplasmic reticulum membrane. It carries out the reaction sphinganine + 2 Fe(II)-[cytochrome b5] + O2 + 2 H(+) = (4R)-hydroxysphinganine + 2 Fe(III)-[cytochrome b5] + H2O. The catalysed reaction is an N-acylsphinganine + 2 Fe(II)-[cytochrome b5] + O2 + 2 H(+) = an N-acyl-(4R)-4-hydroxysphinganine + 2 Fe(III)-[cytochrome b5] + H2O. The enzyme catalyses an N-acyleicosasphinganine + 2 Fe(II)-[cytochrome b5] + O2 + 2 H(+) = N-acyl-4-hydroxyeicosasphinganine + 2 Fe(III)-[cytochrome b5] + H2O. Its pathway is membrane lipid metabolism; sphingolipid biosynthesis. Required for hydroxylation of C-4 in the sphingoid moiety of ceramide. Catalyzes the conversion of sphinganine to phytosphingosine in sphingolipid biosynthesis. Involved in the response to syringomycin. The protein is Sphingolipid C4-hydroxylase SUR2 (SUR2) of Saccharomyces cerevisiae (strain ATCC 204508 / S288c) (Baker's yeast).